The chain runs to 381 residues: E3 ubiquitin-protein ligase Fancl (381 aa).

A UBC-RWD region (URD) region spans residues 110–293 (NIYYDILALY…MFDLCYFPMP (184 aa)). The RING-CH-type; degenerate zinc finger occupies 303–374 (EEDNEELRCN…PFCKAKLSTS (72 aa)). Positions 311, 314, 329, 334, 339, 342, 364, and 367 each coordinate Zn(2+).

Interacts (via C-terminus) with FANCI and Fancd2.

Its subcellular location is the nucleus. The catalysed reaction is S-ubiquitinyl-[E2 ubiquitin-conjugating enzyme]-L-cysteine + [acceptor protein]-L-lysine = [E2 ubiquitin-conjugating enzyme]-L-cysteine + N(6)-ubiquitinyl-[acceptor protein]-L-lysine.. The protein operates within protein modification; protein ubiquitination. Ubiquitin ligase protein that mediates monoubiquitination of Fancd2. Ubiquitination of Fancd2 is stimulated by ionising radiation. Together with Fancd2, and probably FANCI, involved in DNA repair of damage caused by agents that induce interstrand cross-links but not agents that cause double strand breaks. The sequence is that of E3 ubiquitin-protein ligase Fancl from Drosophila melanogaster (Fruit fly).